The sequence spans 35 residues: Thaumatin-like protein 6 (35 aa).

Belongs to the thaumatin family.

This chain is Thaumatin-like protein 6, found in Glebionis coronaria (Crown daisy).